The primary structure comprises 256 residues: Acetyl-coenzyme A carboxylase carboxyl transferase subunit alpha (256 aa).

A CoA carboxyltransferase C-terminal domain is found at Met-1–Ser-236.

It belongs to the AccA family. Acetyl-CoA carboxylase is a heterohexamer composed of biotin carboxyl carrier protein (AccB), biotin carboxylase (AccC) and two subunits each of ACCase subunit alpha (AccA) and ACCase subunit beta (AccD).

It is found in the cytoplasm. It catalyses the reaction N(6)-carboxybiotinyl-L-lysyl-[protein] + acetyl-CoA = N(6)-biotinyl-L-lysyl-[protein] + malonyl-CoA. Its pathway is lipid metabolism; malonyl-CoA biosynthesis; malonyl-CoA from acetyl-CoA: step 1/1. Its function is as follows. Component of the acetyl coenzyme A carboxylase (ACC) complex. First, biotin carboxylase catalyzes the carboxylation of biotin on its carrier protein (BCCP) and then the CO(2) group is transferred by the carboxyltransferase to acetyl-CoA to form malonyl-CoA. In Streptococcus sanguinis (strain SK36), this protein is Acetyl-coenzyme A carboxylase carboxyl transferase subunit alpha.